The chain runs to 131 residues: Histone H2B (131 aa).

A compositionally biased stretch (basic and acidic residues) spans 1–19 (MAPKAEKKPASKAPAEKKP). Residues 1 to 38 (MAPKAEKKPASKAPAEKKPAAKKTASSTDGGKKRTKAR) are disordered. Residues Lys7 and Lys8 each carry the N6-acetyllysine; alternate modification. Glycyl lysine isopeptide (Lys-Gly) (interchain with G-Cter in SUMO); alternate cross-links involve residues Lys7 and Lys8. Residue Ser11 is modified to Phosphoserine. Lys12 is modified (N6-acetyllysine). Lys17 carries the post-translational modification N6-acetyllysine; alternate. Residue Lys17 forms a Glycyl lysine isopeptide (Lys-Gly) (interchain with G-Cter in SUMO); alternate linkage. Lys18 participates in a covalent cross-link: Glycyl lysine isopeptide (Lys-Gly) (interchain with G-Cter in SUMO). Lys125 participates in a covalent cross-link: Glycyl lysine isopeptide (Lys-Gly) (interchain with G-Cter in ubiquitin).

This sequence belongs to the histone H2B family. As to quaternary structure, the nucleosome is a histone octamer containing two molecules each of H2A, H2B, H3 and H4 assembled in one H3-H4 heterotetramer and two H2A-H2B heterodimers. The octamer wraps approximately 147 bp of DNA. Post-translationally, monoubiquitinated by the UBC2-BRE1 complex to form H2BK123ub1. H2BK123ub1 gives a specific tag for epigenetic transcriptional activation and is also prerequisite for H3K4me and H3K79me formation. H2BK123ub1 also modulates the formation of double-strand breaks during meiosis and is a prerequisite for DNA-damage checkpoint activation. Phosphorylated by STE20 to form H2BS10ph during progression through meiotic prophase. May be correlated with chromosome condensation. In terms of processing, acetylated by GCN5 to form H2BK11ac and H2BK16ac. H2BK16ac can also be formed by ESA1. Acetylation of N-terminal lysines and particularly formation of H2BK11acK16ac has a positive effect on transcription. Post-translationally, sumoylation to form H2BK6su or H2BK7su, and probably also H2BK16su or H2BK17su, occurs preferentially near the telomeres and represses gene transcription.

It is found in the nucleus. It localises to the chromosome. Its function is as follows. Core component of nucleosome. Nucleosomes wrap and compact DNA into chromatin, limiting DNA accessibility to the cellular machineries which require DNA as a template. Histones thereby play a central role in transcription regulation, DNA repair, DNA replication and chromosomal stability. DNA accessibility is regulated via a complex set of post-translational modifications of histones, also called histone code, and nucleosome remodeling. The chain is Histone H2B (HTB1) from Lodderomyces elongisporus (strain ATCC 11503 / CBS 2605 / JCM 1781 / NBRC 1676 / NRRL YB-4239) (Yeast).